The sequence spans 355 residues: Protein RecA (355 aa).

74 to 81 (GPESSGKT) contacts ATP.

It belongs to the RecA family.

The protein localises to the cytoplasm. Functionally, can catalyze the hydrolysis of ATP in the presence of single-stranded DNA, the ATP-dependent uptake of single-stranded DNA by duplex DNA, and the ATP-dependent hybridization of homologous single-stranded DNAs. It interacts with LexA causing its activation and leading to its autocatalytic cleavage. The protein is Protein RecA of Cytophaga hutchinsonii (strain ATCC 33406 / DSM 1761 / CIP 103989 / NBRC 15051 / NCIMB 9469 / D465).